The chain runs to 62 residues: Conotoxin Gm5.2 (62 aa).

The signal sequence occupies residues 1–22; it reads MRCLPVFVILLLLIASAPSVDA. Residues 23–49 constitute a propeptide that is removed on maturation; that stretch reads QPKTKDDVPLAPLHDNIRSTLQTLRKK. Ser60 carries the post-translational modification Serine amide.

This sequence belongs to the conotoxin T superfamily. Contains 2 disulfide bonds that can be either 'C1-C3, C2-C4' or 'C1-C4, C2-C3', since these disulfide connectivities have been observed for conotoxins with cysteine framework V (for examples, see AC P0DQQ7 and AC P81755). As to expression, expressed by the venom duct.

It localises to the secreted. The sequence is that of Conotoxin Gm5.2 from Conus gloriamaris (Glory-of-the-Sea cone).